A 517-amino-acid polypeptide reads, in one-letter code: Beta-glucosidase 17 (517 aa).

Residues 1-23 (MAIKSIFIIIIISIITSISELYA) form the signal peptide. A beta-D-glucoside contacts are provided by residues Gln-54, His-158, and 203 to 204 (NE). Glu-204 serves as the catalytic Proton donor. Cys-223 and Cys-230 are disulfide-bonded. A glycan (N-linked (GlcNAc...) asparagine) is linked at Asn-229. A beta-D-glucoside is bound at residue Tyr-346. N-linked (GlcNAc...) asparagine glycosylation is found at Asn-361 and Asn-371. A beta-D-glucoside-binding positions include Glu-417, Trp-466, 473-474 (EW), and Tyr-482. Residue Glu-417 is the Nucleophile of the active site. Residue Asn-510 is glycosylated (N-linked (GlcNAc...) asparagine).

This sequence belongs to the glycosyl hydrolase 1 family.

The enzyme catalyses Hydrolysis of terminal, non-reducing beta-D-glucosyl residues with release of beta-D-glucose.. The polypeptide is Beta-glucosidase 17 (Arabidopsis thaliana (Mouse-ear cress)).